Here is a 317-residue protein sequence, read N- to C-terminus: MAVMNHLRVILQVSSSTLPWRRCWVPRLVPRRSCSLYTCTYRTRNRALPPLWENLDLVPAGDRQSPINIRWRDSVYDPGLKPLTISYDPATCLHIWNNGYSFLVEFEDSTDKSVVEGGPLEHNYRLKQFHFHWGAIDAWGSEHTVDSKCYPAELHLVHWNAVKFESFEDAALEENGLAVIGVFLKLGKHHKELQKLVDTLPSIKHKDTLVEFGSFDPSCLMPTCPDYWTYSGSLTTPPLSESVTWIIKKQPVEVDRDQLEQFRTLLFTSEGEKEKRMVDNFRPLQPLMNRTVRSSFRHDYVLNIQVKPKPTASEVTP.

The transit peptide at 1–33 directs the protein to the mitochondrion; that stretch reads MAVMNHLRVILQVSSSTLPWRRCWVPRLVPRRS. Residues 37-296 enclose the Alpha-carbonic anhydrase domain; the sequence is YTCTYRTRNR…LMNRTVRSSF (260 aa). Residues H130, H132, and H155 each contribute to the Zn(2+) site. A substrate-binding site is contributed by 235 to 236; the sequence is TT.

This sequence belongs to the alpha-carbonic anhydrase family. The cofactor is Zn(2+). In terms of tissue distribution, expressed in the heart, liver, lung, kidney, testis, and skeletal muscle (at protein level).

Its subcellular location is the mitochondrion. The enzyme catalyses hydrogencarbonate + H(+) = CO2 + H2O. In terms of biological role, mitochondrial carbonic anhydrase that catalyzes the reversible conversion of carbon dioxide to bicarbonate/HCO3. In Mus musculus (Mouse), this protein is Carbonic anhydrase 5B, mitochondrial (Ca5b).